A 546-amino-acid chain; its full sequence is SusD-like protein BACOVA_02651 (546 aa).

Residues 1-21 form the signal peptide; it reads MRIFMKSKLLVIATTALLFAA. The N-palmitoyl cysteine moiety is linked to residue cysteine 22. The S-diacylglycerol cysteine moiety is linked to residue cysteine 22.

Belongs to the SusD family.

It localises to the cell outer membrane. It participates in glucan metabolism; xyloglucan degradation. Its function is as follows. Polysaccharide-binding protein present at the surface of the cell. Probably mediates xyloglucan-binding before xyloglucan transport in the periplasm for degradation. The sequence is that of SusD-like protein BACOVA_02651 from Bacteroides ovatus (strain ATCC 8483 / DSM 1896 / JCM 5824 / BCRC 10623 / CCUG 4943 / NCTC 11153).